The chain runs to 200 residues: NADH-quinone oxidoreductase subunit C (200 aa).

It belongs to the complex I 30 kDa subunit family. NDH-1 is composed of 14 different subunits. Subunits NuoB, C, D, E, F, and G constitute the peripheral sector of the complex.

The protein resides in the cell inner membrane. The catalysed reaction is a quinone + NADH + 5 H(+)(in) = a quinol + NAD(+) + 4 H(+)(out). Functionally, NDH-1 shuttles electrons from NADH, via FMN and iron-sulfur (Fe-S) centers, to quinones in the respiratory chain. The immediate electron acceptor for the enzyme in this species is believed to be ubiquinone. Couples the redox reaction to proton translocation (for every two electrons transferred, four hydrogen ions are translocated across the cytoplasmic membrane), and thus conserves the redox energy in a proton gradient. This Rhizobium johnstonii (strain DSM 114642 / LMG 32736 / 3841) (Rhizobium leguminosarum bv. viciae) protein is NADH-quinone oxidoreductase subunit C.